The primary structure comprises 233 residues: Antilisterial bacteriocin subtilosin biosynthesis protein AlbG (233 aa).

The next 6 membrane-spanning stretches (helical) occupy residues 7 to 27 (FTLL…VQAV), 46 to 66 (GLLA…LHYV), 116 to 136 (TYVM…FEIV), 145 to 165 (TPPA…LFCM), 176 to 198 (GSLF…MLSF), and 203 to 220 (LLFL…SFIY).

The protein localises to the cell membrane. Its function is as follows. Involved in the production of the bacteriocin subtilosin. This Bacillus subtilis (strain 168) protein is Antilisterial bacteriocin subtilosin biosynthesis protein AlbG (albG).